A 214-amino-acid polypeptide reads, in one-letter code: Large ribosomal subunit protein uL3 (214 aa).

This sequence belongs to the universal ribosomal protein uL3 family. Part of the 50S ribosomal subunit. Forms a cluster with proteins L14 and L19.

One of the primary rRNA binding proteins, it binds directly near the 3'-end of the 23S rRNA, where it nucleates assembly of the 50S subunit. The chain is Large ribosomal subunit protein uL3 from Streptomyces coelicolor (strain ATCC BAA-471 / A3(2) / M145).